Reading from the N-terminus, the 445-residue chain is UPF0210 protein llmg_1581 (445 aa).

This sequence belongs to the UPF0210 family. In terms of assembly, homodimer.

The polypeptide is UPF0210 protein llmg_1581 (Lactococcus lactis subsp. cremoris (strain MG1363)).